The sequence spans 637 residues: Chaperone protein HtpG (637 aa).

The interval 1 to 345 (MSQQETHGFQ…SNDLPLNVSR (345 aa)) is a; substrate-binding. The interval 346-562 (EILQDNHITK…EGEMSSQMIK (217 aa)) is b. Residues 563–637 (LMQAAGQPVP…MNQMLLANLK (75 aa)) form a c region.

This sequence belongs to the heat shock protein 90 family. Homodimer.

It is found in the cytoplasm. Functionally, molecular chaperone. Has ATPase activity. The sequence is that of Chaperone protein HtpG from Shewanella sp. (strain MR-4).